A 372-amino-acid polypeptide reads, in one-letter code: PqqA peptide cyclase (372 aa).

Residues 4 to 220 (APPPLSVLLE…ETARRQLGDR (217 aa)) form the Radical SAM core domain. Residues cysteine 18, cysteine 22, and cysteine 25 each coordinate [4Fe-4S] cluster. The segment at 342 to 372 (ATAEQESASPAPAFIYRRPERPAAATADPLE) is disordered.

It belongs to the radical SAM superfamily. PqqE family. As to quaternary structure, interacts with PqqD. The interaction is necessary for activity of PqqE. It depends on [4Fe-4S] cluster as a cofactor.

The catalysed reaction is [PQQ precursor protein] + S-adenosyl-L-methionine = E-Y cross-linked-[PQQ precursor protein] + 5'-deoxyadenosine + L-methionine + H(+). It functions in the pathway cofactor biosynthesis; pyrroloquinoline quinone biosynthesis. Catalyzes the cross-linking of a glutamate residue and a tyrosine residue in the PqqA protein as part of the biosynthesis of pyrroloquinoline quinone (PQQ). In Xanthomonas euvesicatoria pv. vesicatoria (strain 85-10) (Xanthomonas campestris pv. vesicatoria), this protein is PqqA peptide cyclase.